The primary structure comprises 221 residues: Kinetochore protein Spc25 (221 aa).

Residues 63 to 114 adopt a coiled-coil conformation; sequence VIQRREEMEKRVSFMEELAQEVEATKQRNLVMREQIKQQKMLVRQRKNEIME.

The protein belongs to the SPC25 family. As to quaternary structure, component of the Ndc80 complex, which is composed of Ndc80, Nuf2 and Spc25.

The protein resides in the nucleus. It is found in the chromosome. The protein localises to the centromere. Its subcellular location is the kinetochore. Functionally, acts as a component of the essential kinetochore-associated Ndc80 complex, which is required for chromosome segregation and spindle checkpoint activity during meiosis and mitosis. Required for kinetochore integrity and the organization of stable microtubule binding sites in the outer plate of the kinetochore. Participates in SAC signaling that responds specifically to disruptions in spindle microtubule dynamics. The NDC80 complex synergistically enhances the affinity of the SKA1 complex for microtubules and may allow the NDC80 complex to track depolymerizing microtubules. In Drosophila eugracilis (Fruit fly), this protein is Kinetochore protein Spc25.